A 95-amino-acid polypeptide reads, in one-letter code: MSKDSKMRATINQKLTEMGERERLKELLRAKLTECGWRDQLKAHCKDVIKEKGLEHVTVEDLVVEITPKGRVLVPDSVKKELLQRIRAFLAQHAT.

This sequence belongs to the ENY2 family. As to quaternary structure, component of the nuclear pore complex (NPC)-associated TREX-2 complex (transcription and export complex 2). Component of the SAGA transcription coactivator-HAT complex. Within the SAGA complex, participates in a subcomplex of SAGA called the DUB module (deubiquitination module).

It is found in the nucleus. It localises to the nucleoplasm. Involved in mRNA export coupled transcription activation by association with both the TREX-2 and the SAGA complexes. The transcription regulatory histone acetylation (HAT) complex SAGA is a multiprotein complex that activates transcription by remodeling chromatin and mediating histone acetylation and deubiquitination. Within the SAGA complex, participates in a subcomplex that specifically deubiquitinates histones. The SAGA complex is recruited to specific gene promoters by activators, where it is required for transcription. The TREX-2 complex functions in docking export-competent ribonucleoprotein particles (mRNPs) to the nuclear entrance of the nuclear pore complex (nuclear basket). TREX-2 participates in mRNA export and accurate chromatin positioning in the nucleus by tethering genes to the nuclear periphery. The polypeptide is Transcription and mRNA export factor ENY2-2 (eny2-2) (Salmo salar (Atlantic salmon)).